Consider the following 166-residue polypeptide: Anaerobic nitrite reductase NSHB1 (166 aa).

A Globin domain is found at 13–163 (SFSEEQEALV…LVAAIKQEMK (151 aa)). The short motif at 46–50 (EVAPS) is the Homodimerization element. Residues Ser-56, Lys-70, His-74, Arg-104, Thr-108, and His-109 each contribute to the heme b site. Residues 116–128 (DAHFEVVKFALLD) carry the Homodimerization motif.

It belongs to the plant globin family. In terms of assembly, homodimer. Heme b serves as cofactor. Expressed in coleoptiles, embryos, leaves, seminal roots and roots.

The protein localises to the cytoplasm. The protein resides in the nucleus. The enzyme catalyses Fe(III)-heme b-[protein] + nitric oxide + H2O = Fe(II)-heme b-[protein] + nitrite + 2 H(+). With respect to regulation, slowly reduced by ascorbic acid (AA); this reaction may become a source of nitric oxide (NO) during hypoxia. Phytoglobin that reduces nitrite to nitric oxide under anoxic conditions (e.g. during flooding or in waterlogged soil). May not function as an oxygen storage or transport protein. Has an unusually high affinity for O(2) through a hexacoordinate heme iron because of a very low dissociation constant. The protein is Anaerobic nitrite reductase NSHB1 of Oryza sativa subsp. japonica (Rice).